The following is a 356-amino-acid chain: Histidinol-phosphate aminotransferase (356 aa).

Lysine 210 is subject to N6-(pyridoxal phosphate)lysine.

This sequence belongs to the class-II pyridoxal-phosphate-dependent aminotransferase family. Histidinol-phosphate aminotransferase subfamily. Homodimer. The cofactor is pyridoxal 5'-phosphate.

The catalysed reaction is L-histidinol phosphate + 2-oxoglutarate = 3-(imidazol-4-yl)-2-oxopropyl phosphate + L-glutamate. Its pathway is amino-acid biosynthesis; L-histidine biosynthesis; L-histidine from 5-phospho-alpha-D-ribose 1-diphosphate: step 7/9. The chain is Histidinol-phosphate aminotransferase (hisC) from Acetobacter pasteurianus (Acetobacter turbidans).